A 112-amino-acid polypeptide reads, in one-letter code: T cell receptor alpha variable 21 (112 aa).

An N-terminal signal peptide occupies residues 1-19; the sequence is METLLGLLILWLQLQWVSS. The region spanning 21-112 is the Ig-like domain; sequence QEVTQIPAAL…DSATYLCAVR (92 aa). Residues asparagine 41 and asparagine 82 are each glycosylated (N-linked (GlcNAc...) asparagine). Cysteine 42 and cysteine 109 are joined by a disulfide.

Alpha-beta TR is a heterodimer composed of an alpha and beta chain; disulfide-linked. The alpha-beta TR is associated with the transmembrane signaling CD3 coreceptor proteins to form the TR-CD3 (TcR or TCR). The assembly of alpha-beta TR heterodimers with CD3 occurs in the endoplasmic reticulum where a single alpha-beta TR heterodimer associates with one CD3D-CD3E heterodimer, one CD3G-CD3E heterodimer and one CD247 homodimer forming a stable octameric structure. CD3D-CD3E and CD3G-CD3E heterodimers preferentially associate with TR alpha and TR beta chains, respectively. The association of the CD247 homodimer is the last step of TcR assembly in the endoplasmic reticulum and is required for transport to the cell surface.

It is found in the cell membrane. Its function is as follows. V region of the variable domain of T cell receptor (TR) alpha chain that participates in the antigen recognition. Alpha-beta T cell receptors are antigen specific receptors which are essential to the immune response and are present on the cell surface of T lymphocytes. Recognize peptide-major histocompatibility (MH) (pMH) complexes that are displayed by antigen presenting cells (APC), a prerequisite for efficient T cell adaptive immunity against pathogens. Binding of alpha-beta TR to pMH complex initiates TR-CD3 clustering on the cell surface and intracellular activation of LCK that phosphorylates the ITAM motifs of CD3G, CD3D, CD3E and CD247 enabling the recruitment of ZAP70. In turn ZAP70 phosphorylates LAT, which recruits numerous signaling molecules to form the LAT signalosome. The LAT signalosome propagates signal branching to three major signaling pathways, the calcium, the mitogen-activated protein kinase (MAPK) kinase and the nuclear factor NF-kappa-B (NF-kB) pathways, leading to the mobilization of transcription factors that are critical for gene expression and essential for T cell growth and differentiation. The T cell repertoire is generated in the thymus, by V-(D)-J rearrangement. This repertoire is then shaped by intrathymic selection events to generate a peripheral T cell pool of self-MH restricted, non-autoaggressive T cells. Post-thymic interaction of alpha-beta TR with the pMH complexes shapes TR structural and functional avidity. This Homo sapiens (Human) protein is T cell receptor alpha variable 21.